The primary structure comprises 396 residues: Elongation factor Tu (396 aa).

The tr-type G domain occupies 10-205 (KPHVNVGTIG…AVDEYIPTPE (196 aa)). The G1 stretch occupies residues 19 to 26 (GHVDHGKT). 19–26 (GHVDHGKT) serves as a coordination point for GTP. Thr-26 is a Mg(2+) binding site. The interval 61 to 65 (GITIA) is G2. The G3 stretch occupies residues 82–85 (DCPG). GTP-binding positions include 82-86 (DCPGH) and 137-140 (NKTD). The segment at 137–140 (NKTD) is G4. Residues 175-177 (SAL) are G5.

It belongs to the TRAFAC class translation factor GTPase superfamily. Classic translation factor GTPase family. EF-Tu/EF-1A subfamily. Monomer.

The protein localises to the cytoplasm. It carries out the reaction GTP + H2O = GDP + phosphate + H(+). Functionally, GTP hydrolase that promotes the GTP-dependent binding of aminoacyl-tRNA to the A-site of ribosomes during protein biosynthesis. This chain is Elongation factor Tu, found in Salinibacter ruber (strain DSM 13855 / M31).